The sequence spans 1697 residues: Neurexin-3a (1697 aa).

A signal peptide spans 1–23; the sequence is MNFFRFPVQLQLLISTVLGPCLG. Positions 24 to 198 constitute a Laminin G-like 1 domain; that stretch reads LEFTGLQGQW…RVRMDIEGIC (175 aa). The Extracellular segment spans residues 24-1622; that stretch reads LEFTGLQGQW…EVVRESSSTT (1599 aa). Residues 194 to 231 enclose the EGF-like 1 domain; the sequence is IEGICMENPCENGGTCSVVDGEPLCDCSKTEYVGRFCN. Cystine bridges form between Cys-198–Cys-209, Cys-203–Cys-218, and Cys-220–Cys-230. 2 consecutive Laminin G-like domains span residues 258-455 and 462-654; these read VATF…VFKC and DPIS…KPSC. Ca(2+)-binding residues include Asp-304, Leu-321, and Met-389. Disulfide bonds link Cys-419/Cys-455, Cys-625/Cys-654, Cys-662/Cys-673, Cys-667/Cys-682, and Cys-684/Cys-694. Positions 658–695 constitute an EGF-like 2 domain; that stretch reads SGKQCDSYPCKNKGLCKEGWNRFICDCTGTGYWSRTCE. 2 Laminin G-like domains span residues 700-872 and 886-1061; these read ILSY…IDFC and DPVT…ERGC. 4 disulfide bridges follow: Cys-1033-Cys-1061, Cys-1077-Cys-1088, Cys-1082-Cys-1097, and Cys-1099-Cys-1109. The EGF-like 3 domain maps to 1073–1110; the sequence is PSTTCQEDSCANMGICIQQWENYTCDCSMTSYTGTHCN. Positions 1114–1314 constitute a Laminin G-like 6 domain; the sequence is TTYIFGKGGG…NPNIKINGSV (201 aa). Disordered stretches follow at residues 1345–1366, 1442–1479, and 1520–1557; these read TMSTTTTRKHRTPPTIQTTDDM, LSDGGSDDCGDDDDDDDDDGLMISGYGSGEAYDSNLPP, and PNKVFDSGRTTTASFSPKLSRSTTTSTPPKLPAGKMNH. The span at 1446-1461 shows a compositional bias: acidic residues; sequence GSDDCGDDDDDDDDDG. Positions 1527-1547 are enriched in polar residues; sequence GRTTTASFSPKLSRSTTTSTP. The chain crosses the membrane as a helical span at residues 1623-1643; it reads GMVVGIVAAAALCILILLYAM. Residues 1644–1697 are Cytoplasmic-facing; the sequence is YKYRNRDEGSYQVDETRNYITNSAQSNGAVMKDKQQSTKSGNKKQKNKDKEYYV. The segment at 1665–1697 is disordered; sequence NSAQSNGAVMKDKQQSTKSGNKKQKNKDKEYYV.

Belongs to the neurexin family.

It is found in the membrane. Its function is as follows. Neuronal cell surface protein that may be involved in cell recognition and cell adhesion. In Danio rerio (Zebrafish), this protein is Neurexin-3a (nrxn3a).